A 124-amino-acid polypeptide reads, in one-letter code: Small ribosomal subunit protein eS6 (124 aa).

It belongs to the eukaryotic ribosomal protein eS6 family.

The polypeptide is Small ribosomal subunit protein eS6 (Methanococcus maripaludis (strain C5 / ATCC BAA-1333)).